The sequence spans 141 residues: Galactose-6-phosphate isomerase subunit LacA (141 aa).

The protein belongs to the LacAB/RpiB family. Heteromultimeric protein consisting of LacA and LacB.

The enzyme catalyses aldehydo-D-galactose 6-phosphate = keto-D-tagatose 6-phosphate. It participates in carbohydrate metabolism; D-galactose 6-phosphate degradation; D-tagatose 6-phosphate from D-galactose 6-phosphate: step 1/1. In Streptococcus equi subsp. equi (strain 4047), this protein is Galactose-6-phosphate isomerase subunit LacA.